Here is a 143-residue protein sequence, read N- to C-terminus: Large ribosomal subunit protein uL11 (143 aa).

This sequence belongs to the universal ribosomal protein uL11 family. As to quaternary structure, part of the ribosomal stalk of the 50S ribosomal subunit. Interacts with L10 and the large rRNA to form the base of the stalk. L10 forms an elongated spine to which L12 dimers bind in a sequential fashion forming a multimeric L10(L12)X complex. Post-translationally, one or more lysine residues are methylated.

Its function is as follows. Forms part of the ribosomal stalk which helps the ribosome interact with GTP-bound translation factors. This is Large ribosomal subunit protein uL11 from Azoarcus sp. (strain BH72).